Reading from the N-terminus, the 293-residue chain is Small ribosomal subunit protein uS2m (293 aa).

Residues 21–38 (GRAAQRGRTLGSAAAAAA) show a composition bias toward low complexity. Disordered regions lie at residues 21 to 49 (GRAA…DRSA) and 263 to 293 (QGAP…GHSP). The segment covering 39–49 (REPERDSDRSA) has biased composition (basic and acidic residues). The span at 267-279 (GPHPANPAAPGAP) shows a compositional bias: pro residues.

The protein belongs to the universal ribosomal protein uS2 family. As to quaternary structure, component of the mitochondrial ribosome small subunit (28S) which comprises a 12S rRNA and about 30 distinct proteins.

The protein resides in the mitochondrion. Its function is as follows. Required for mitoribosome formation and stability, and mitochondrial translation. This chain is Small ribosomal subunit protein uS2m (MRPS2), found in Bos taurus (Bovine).